The chain runs to 292 residues: tRNA pseudouridine synthase B (292 aa).

Residue Asp38 is the Nucleophile of the active site.

This sequence belongs to the pseudouridine synthase TruB family. Type 1 subfamily.

It catalyses the reaction uridine(55) in tRNA = pseudouridine(55) in tRNA. Its function is as follows. Responsible for synthesis of pseudouridine from uracil-55 in the psi GC loop of transfer RNAs. The protein is tRNA pseudouridine synthase B of Streptococcus gordonii (strain Challis / ATCC 35105 / BCRC 15272 / CH1 / DL1 / V288).